The primary structure comprises 315 residues: Serine/threonine-protein phosphatase PP2A catalytic subunit 2 (315 aa).

Residues D62, H64, D90, and N122 each contribute to the Mn(2+) site. H123 (proton donor) is an active-site residue. 2 residues coordinate Mn(2+): H172 and H247. The disordered stretch occupies residues 294-315 (QFEPAPRENEPHTTRRVPDYFL). Residues 298–315 (APRENEPHTTRRVPDYFL) are compositionally biased toward basic and acidic residues. L315 bears the Leucine methyl ester mark.

This sequence belongs to the PPP phosphatase family. PP-2A subfamily. Mn(2+) serves as cofactor. Post-translationally, reversibly methyl esterified on Leu-315 by leucine carboxyl methyltransferase 1 (PPM1) and protein phosphatase methylesterase 1 (PPE1). Carboxyl methylation influences the affinity of the catalytic subunit for the different regulatory subunits, thereby modulating the PP2A holoenzyme's substrate specificity, enzyme activity and cellular localization.

The catalysed reaction is O-phospho-L-seryl-[protein] + H2O = L-seryl-[protein] + phosphate. It carries out the reaction O-phospho-L-threonyl-[protein] + H2O = L-threonyl-[protein] + phosphate. The chain is Serine/threonine-protein phosphatase PP2A catalytic subunit 2 (Ppn2) from Paramecium tetraurelia.